A 425-amino-acid chain; its full sequence is Polyribonucleotide 5'-hydroxyl-kinase Clp1 (425 aa).

Residues Glu22, Lys62, and 124-129 contribute to the ATP site; that span reads DVGKST.

Belongs to the Clp1 family. Clp1 subfamily. In terms of assembly, component of the tRNA splicing endonuclease complex, composed of CLP1, TSEN2, TSEN15, TSEN34 and TSEN54. Component of pre-mRNA cleavage complex II (CF-II). Also associates with numerous components of the pre-mRNA cleavage complex I (CF-I/CFIm), including NUDT21, CPSF2, CPSF3, CPSF6 and CPSF7. Interacts with CSTF2 and SYMPK. Mg(2+) serves as cofactor. The cofactor is Mn(2+). Ni(2+) is required as a cofactor.

It localises to the nucleus. It catalyses the reaction a 5'-end dephospho-2'-deoxyribonucleoside-DNA + ATP = a 5'-end 5'-phospho-2'-deoxyribonucleoside-DNA + ADP + H(+). It carries out the reaction a 5'-end dephospho-ribonucleoside-RNA + ATP = a 5'-end 5'-phospho-ribonucleoside-RNA + ADP + H(+). In terms of biological role, polynucleotide kinase that can phosphorylate the 5'-hydroxyl groups of double-stranded RNA (dsRNA), single-stranded RNA (ssRNA), double-stranded DNA (dsDNA) and double-stranded DNA:RNA hybrids. dsRNA is phosphorylated more efficiently than dsDNA, and the RNA component of a DNA:RNA hybrid is phosphorylated more efficiently than the DNA component. Plays a key role in both tRNA splicing and mRNA 3'-end formation. Component of the tRNA splicing endonuclease complex: phosphorylates the 5'-terminus of the tRNA 3'-exon during tRNA splicing; this phosphorylation event is a prerequisite for the subsequent ligation of the two exon halves and the production of a mature tRNA. Its role in tRNA splicing and maturation is required for cerebellar development. Component of the pre-mRNA cleavage complex II (CF-II), which seems to be required for mRNA 3'-end formation. Also phosphorylates the 5'-terminus of exogenously introduced short interfering RNAs (siRNAs), which is a necessary prerequisite for their incorporation into the RNA-induced silencing complex (RISC). However, endogenous siRNAs and microRNAs (miRNAs) that are produced by the cleavage of dsRNA precursors by DICER1 already contain a 5'-phosphate group, so this protein may be dispensible for normal RNA-mediated gene silencing. In Homo sapiens (Human), this protein is Polyribonucleotide 5'-hydroxyl-kinase Clp1.